We begin with the raw amino-acid sequence, 122 residues long: Large ribosomal subunit protein uL14 (122 aa).

Belongs to the universal ribosomal protein uL14 family. In terms of assembly, part of the 50S ribosomal subunit. Forms a cluster with proteins L3 and L19. In the 70S ribosome, L14 and L19 interact and together make contacts with the 16S rRNA in bridges B5 and B8.

Binds to 23S rRNA. Forms part of two intersubunit bridges in the 70S ribosome. This Thermoanaerobacter pseudethanolicus (strain ATCC 33223 / 39E) (Clostridium thermohydrosulfuricum) protein is Large ribosomal subunit protein uL14.